A 453-amino-acid polypeptide reads, in one-letter code: Bifunctional protein GlmU (453 aa).

The segment at 1 to 225 is pyrophosphorylase; sequence MHAHVILAAG…AEEALGVNTR (225 aa). Residues 7-10, Lys21, Gln72, and 77-78 each bind UDP-N-acetyl-alpha-D-glucosamine; these read LAAG and GT. Asp102 provides a ligand contact to Mg(2+). 4 residues coordinate UDP-N-acetyl-alpha-D-glucosamine: Gly138, Glu152, Asn167, and Asn223. Asn223 contacts Mg(2+). Residues 226-246 form a linker region; that stretch reads EELARVEGVLLRRLRAEWMGK. Positions 247–453 are N-acetyltransferase; sequence GVRMILPETI…GYALRKLGEG (207 aa). 2 residues coordinate UDP-N-acetyl-alpha-D-glucosamine: Arg329 and Lys347. His359 functions as the Proton acceptor in the catalytic mechanism. Positions 362 and 373 each coordinate UDP-N-acetyl-alpha-D-glucosamine. Acetyl-CoA contacts are provided by residues Ala376, 382–383, Ser401, Ala419, and Arg436; that span reads NY.

It in the N-terminal section; belongs to the N-acetylglucosamine-1-phosphate uridyltransferase family. This sequence in the C-terminal section; belongs to the transferase hexapeptide repeat family. In terms of assembly, homotrimer. Mg(2+) serves as cofactor.

Its subcellular location is the cytoplasm. The enzyme catalyses alpha-D-glucosamine 1-phosphate + acetyl-CoA = N-acetyl-alpha-D-glucosamine 1-phosphate + CoA + H(+). The catalysed reaction is N-acetyl-alpha-D-glucosamine 1-phosphate + UTP + H(+) = UDP-N-acetyl-alpha-D-glucosamine + diphosphate. The protein operates within nucleotide-sugar biosynthesis; UDP-N-acetyl-alpha-D-glucosamine biosynthesis; N-acetyl-alpha-D-glucosamine 1-phosphate from alpha-D-glucosamine 6-phosphate (route II): step 2/2. Its pathway is nucleotide-sugar biosynthesis; UDP-N-acetyl-alpha-D-glucosamine biosynthesis; UDP-N-acetyl-alpha-D-glucosamine from N-acetyl-alpha-D-glucosamine 1-phosphate: step 1/1. It functions in the pathway bacterial outer membrane biogenesis; LPS lipid A biosynthesis. In terms of biological role, catalyzes the last two sequential reactions in the de novo biosynthetic pathway for UDP-N-acetylglucosamine (UDP-GlcNAc). The C-terminal domain catalyzes the transfer of acetyl group from acetyl coenzyme A to glucosamine-1-phosphate (GlcN-1-P) to produce N-acetylglucosamine-1-phosphate (GlcNAc-1-P), which is converted into UDP-GlcNAc by the transfer of uridine 5-monophosphate (from uridine 5-triphosphate), a reaction catalyzed by the N-terminal domain. In Thermus thermophilus (strain ATCC 27634 / DSM 579 / HB8), this protein is Bifunctional protein GlmU.